Consider the following 282-residue polypeptide: NAD kinase (282 aa).

The active-site Proton acceptor is the D67. NAD(+) contacts are provided by residues 67 to 68 (DG), 140 to 141 (NE), H151, R170, D172, and 183 to 188 (TAYNLS).

It belongs to the NAD kinase family. A divalent metal cation is required as a cofactor.

The protein resides in the cytoplasm. It carries out the reaction NAD(+) + ATP = ADP + NADP(+) + H(+). Functionally, involved in the regulation of the intracellular balance of NAD and NADP, and is a key enzyme in the biosynthesis of NADP. Catalyzes specifically the phosphorylation on 2'-hydroxyl of the adenosine moiety of NAD to yield NADP. This is NAD kinase from Halobacterium salinarum (strain ATCC 700922 / JCM 11081 / NRC-1) (Halobacterium halobium).